Consider the following 315-residue polypeptide: Olfactory receptor 5M1 (315 aa).

Residues 1-25 (MFSPNHTIVTEFILLGLTDDPVLEK) lie on the Extracellular side of the membrane. Asparagine 5 is a glycosylation site (N-linked (GlcNAc...) asparagine). Residues 26 to 46 (ILFGVFLAIYLITLAGNLCMI) form a helical membrane-spanning segment. The Cytoplasmic portion of the chain corresponds to 47-54 (LLIRTNSH). A helical membrane pass occupies residues 55–75 (LQTPMYFFLGHLSFVDICYSS). Topologically, residues 76 to 99 (NVTPNMLHNFLSEQKTISYAGCFT) are extracellular. The cysteines at positions 97 and 189 are disulfide-linked. Residues 100–120 (QCLLFIALVITEFYILASMAL) form a helical membrane-spanning segment. At 121–139 (DRYVAICSPLHYSSRMSKN) the chain is on the cytoplasmic side. A helical transmembrane segment spans residues 140–160 (ICVCLVTIPYMYGFLSGFSQS). Residues 161-196 (LLTFHLSFCGSLEINHFYCADPPLIMLACSDTRVKK) are Extracellular-facing. Residues 197 to 217 (MAMFVVAGFNLSSSLFIILLS) form a helical membrane-spanning segment. The Cytoplasmic segment spans residues 218 to 237 (YLFIFAAIFRIRSAEGRHKA). A helical membrane pass occupies residues 238–258 (FSTCASHLTIVTLFYGTLFCM). Topologically, residues 259-271 (YVRPPSEKSVEES) are extracellular. A helical transmembrane segment spans residues 272–292 (KITAVFYTFLSPMLNPLIYSL). The Cytoplasmic segment spans residues 293–315 (RNTDVILAMQQMIRGKSFHKIAV).

Belongs to the G-protein coupled receptor 1 family.

Its subcellular location is the cell membrane. Functionally, odorant receptor. The polypeptide is Olfactory receptor 5M1 (OR5M1) (Homo sapiens (Human)).